Reading from the N-terminus, the 278-residue chain is Digeranylgeranylglyceryl phosphate synthase (278 aa).

Helical transmembrane passes span 12–32 (LKNC…ASYF), 34–54 (LATV…CGFG), 91–111 (LLVF…LMAV), 129–149 (IIGN…GGIA), 153–173 (IDVT…REII), 204–224 (FLLV…FFGI), 225–245 (YYML…YNLV), and 257–277 (SRNI…GSLF).

It belongs to the UbiA prenyltransferase family. DGGGP synthase subfamily. Mg(2+) is required as a cofactor.

It localises to the cell membrane. The catalysed reaction is sn-3-O-(geranylgeranyl)glycerol 1-phosphate + (2E,6E,10E)-geranylgeranyl diphosphate = 2,3-bis-O-(geranylgeranyl)-sn-glycerol 1-phosphate + diphosphate. It participates in membrane lipid metabolism; glycerophospholipid metabolism. Prenyltransferase that catalyzes the transfer of the geranylgeranyl moiety of geranylgeranyl diphosphate (GGPP) to the C2 hydroxyl of (S)-3-O-geranylgeranylglyceryl phosphate (GGGP). This reaction is the second ether-bond-formation step in the biosynthesis of archaeal membrane lipids. The chain is Digeranylgeranylglyceryl phosphate synthase from Methanococcus maripaludis (strain C7 / ATCC BAA-1331).